Reading from the N-terminus, the 585-residue chain is Putative sulfur deprivation response regulator (585 aa).

5 helical membrane-spanning segments follow: residues 5-25 (VVDADVCLFAASTLLLLRGII), 30-50 (AFAGLANDSIVSIALMMMIAA), 83-103 (VASVSAVMNNTPLVAVMIPVV), 117-137 (FMMPLSYSAILGGLCTIIGTS), and 162-182 (IIGLPLTVAGGIYVVLFSPLL). RCK C-terminal domains are found at residues 189–274 (MMAA…LPGL) and 288–372 (ETVA…STEW). A run of 5 helical transmembrane segments spans residues 389–409 (LALFMSLGIFIALIVLNSMDV), 411–431 (PLSTTALVCLFAYLITGVLTV), 442–462 (ILLTVAGGFGVAKAMTVTGLA), 482–502 (VAAIYASTSLLTALLSNGAAV), and 561–581 (FGLPLQFVAALITVPICVLYF).

It belongs to the CitM (TC 2.A.11) transporter family.

The protein resides in the membrane. Functionally, not known; mutations in SAC1 produces cells that cannot synthesize arylsulfatase and cannot take up sulfate as rapidly as wild-type cells. SAC1 is necessary for cells to survive sulfur deprivation. The protein is Putative sulfur deprivation response regulator (SAC1) of Chlamydomonas reinhardtii (Chlamydomonas smithii).